Here is a 37-residue protein sequence, read N- to C-terminus: Large ribosomal subunit protein bL36c (37 aa).

It belongs to the bacterial ribosomal protein bL36 family.

Its subcellular location is the plastid. The protein localises to the chloroplast. In Liriodendron tulipifera (Tuliptree), this protein is Large ribosomal subunit protein bL36c.